A 529-amino-acid polypeptide reads, in one-letter code: Peptide chain release factor 3 (529 aa).

One can recognise a tr-type G domain in the interval 11–280 (NSRRTFAIIS…AFINWAPEPK (270 aa)). GTP is bound by residues 20 to 27 (SHPDAGKT), 88 to 92 (DTPGH), and 142 to 145 (NKMD).

This sequence belongs to the TRAFAC class translation factor GTPase superfamily. Classic translation factor GTPase family. PrfC subfamily.

It localises to the cytoplasm. Functionally, increases the formation of ribosomal termination complexes and stimulates activities of RF-1 and RF-2. It binds guanine nucleotides and has strong preference for UGA stop codons. It may interact directly with the ribosome. The stimulation of RF-1 and RF-2 is significantly reduced by GTP and GDP, but not by GMP. In Acinetobacter baylyi (strain ATCC 33305 / BD413 / ADP1), this protein is Peptide chain release factor 3.